A 302-amino-acid chain; its full sequence is Monopolin complex subunit MAM1 (302 aa).

2 disordered regions span residues 53-83 and 257-276; these read YHKE…QNNV and TSEN…SKGK. Polar residues predominate over residues 257-268; that stretch reads TSENPFSSSPNT.

Component of the monopolin complex composed of at least CSM1, LRS4 and MAM1. The complex associates with the kinetochore during late pachytene. Phosphorylated by CDC5. This phosphorylation is required for the location to the kinetochores during late pachytene.

It is found in the nucleus. Component of the monopolin complex which promotes monoorientation during meiosis I, required for chromosome segregation during meiosis. This chain is Monopolin complex subunit MAM1 (MAM1), found in Saccharomyces cerevisiae (strain ATCC 204508 / S288c) (Baker's yeast).